A 255-amino-acid chain; its full sequence is Ribosomal RNA small subunit methyltransferase G (255 aa).

Residues glycine 89, phenylalanine 94, aspartate 112–threonine 114, valine 140–glutamate 141, and arginine 159 each bind S-adenosyl-L-methionine.

The protein belongs to the methyltransferase superfamily. RNA methyltransferase RsmG family.

Its subcellular location is the cytoplasm. In terms of biological role, specifically methylates the N7 position of a guanine in 16S rRNA. This is Ribosomal RNA small subunit methyltransferase G from Trichodesmium erythraeum (strain IMS101).